A 270-amino-acid polypeptide reads, in one-letter code: tRNA pseudouridine synthase A (270 aa).

Residue Asp60 is the Nucleophile of the active site. Residues 107–111 (FHARF) form an RNA binding region. Tyr118 is a substrate binding site. Residues 168–172 (QCQSR) are interaction with tRNA.

It belongs to the tRNA pseudouridine synthase TruA family. Homodimer.

It carries out the reaction uridine(38/39/40) in tRNA = pseudouridine(38/39/40) in tRNA. Functionally, formation of pseudouridine at positions 38, 39 and 40 in the anticodon stem and loop of transfer RNAs. The sequence is that of tRNA pseudouridine synthase A from Shigella boydii serotype 18 (strain CDC 3083-94 / BS512).